A 138-amino-acid chain; its full sequence is Large ribosomal subunit protein uL16 (138 aa).

Over residues 1-16 (MLIPRRVKHRKQHHPS) the composition is skewed to basic residues. Residues 1-25 (MLIPRRVKHRKQHHPSRSGAAKGGT) are disordered.

This sequence belongs to the universal ribosomal protein uL16 family. Part of the 50S ribosomal subunit.

Functionally, binds 23S rRNA and is also seen to make contacts with the A and possibly P site tRNAs. This chain is Large ribosomal subunit protein uL16, found in Rhodococcus jostii (strain RHA1).